We begin with the raw amino-acid sequence, 294 residues long: Signal peptidase I (294 aa).

The interval 1 to 59 is disordered; that stretch reads MTETTDSPSERQPGPAEPELSSRDPDIAGQVFDAAPFDAAPDADSEGDSKAAKTDEPRP. Topologically, residues 1-66 are cytoplasmic; the sequence is MTETTDSPSE…PRPAKRSTLR (66 aa). Positions 47 to 59 are enriched in basic and acidic residues; sequence GDSKAAKTDEPRP. Residues 67-87 form a helical membrane-spanning segment; it reads EFAVLAVIAVVLYYVMLTFVA. Residues 88-294 are Extracellular-facing; the sequence is RPYLIPSESM…VRSVNPQQGR (207 aa). Residues Ser-96 and Lys-174 contribute to the active site.

Belongs to the peptidase S26 family.

Its subcellular location is the cell membrane. It catalyses the reaction Cleavage of hydrophobic, N-terminal signal or leader sequences from secreted and periplasmic proteins.. This is Signal peptidase I (lepB) from Mycobacterium tuberculosis (strain CDC 1551 / Oshkosh).